The primary structure comprises 202 residues: dITP/XTP pyrophosphatase (202 aa).

11 to 16 is a substrate binding site; the sequence is TNNANK. Residue Asp-73 is the Proton acceptor of the active site. Asp-73 serves as a coordination point for Mg(2+). Substrate-binding positions include Ser-74, 155 to 158, Lys-178, and 183 to 184; these read FGYD and HR.

This sequence belongs to the HAM1 NTPase family. Homodimer. The cofactor is Mg(2+).

It carries out the reaction XTP + H2O = XMP + diphosphate + H(+). The catalysed reaction is dITP + H2O = dIMP + diphosphate + H(+). It catalyses the reaction ITP + H2O = IMP + diphosphate + H(+). In terms of biological role, pyrophosphatase that catalyzes the hydrolysis of nucleoside triphosphates to their monophosphate derivatives, with a high preference for the non-canonical purine nucleotides XTP (xanthosine triphosphate), dITP (deoxyinosine triphosphate) and ITP. Seems to function as a house-cleaning enzyme that removes non-canonical purine nucleotides from the nucleotide pool, thus preventing their incorporation into DNA/RNA and avoiding chromosomal lesions. In Lactiplantibacillus plantarum (strain ATCC BAA-793 / NCIMB 8826 / WCFS1) (Lactobacillus plantarum), this protein is dITP/XTP pyrophosphatase.